Here is a 236-residue protein sequence, read N- to C-terminus: Dense granule protein 7 (236 aa).

Positions 1–26 (MARHAIFSALCVLGLVAAALPQFATA) are cleaved as a signal peptide. The interval 45 to 106 (DGQAPVDSLR…EVHFRKRGVR (62 aa)) is disordered. Residues 70-80 (TTSMDKASVES) are compositionally biased toward polar residues. Positions 147–236 (AVGMGASYFA…SGEDGEDARQ (90 aa)) are required for dimerization, interactions with liposomes and liposome tubulation. A helical membrane pass occupies residues 181–201 (VGTVLGFAALAAAAAFLGMGL). Residues 208–236 (FSPRKNRSRQPALEQEVPESGEDGEDARQ) are disordered. N-linked (GlcNAc...) asparagine glycosylation is present at N213. Positions 223–236 (EVPESGEDGEDARQ) are enriched in acidic residues.

The protein belongs to the Gra7 family. Homodimer. Can form higher order homooligomers in a lipid-stimulated manner. Component of a complex at least composed of ROP18, GRA7 and ROP2. Interacts with ROP5. Interacts with ROP18 in the absence of ROP5. Interacts with mouse IRGA6/IIGP1 in GTP-dependent manner; the interaction results in faster turnover of the GTP-activated IRGA6/IIGP1 oligomer. Interacts with mouse TRAF6 (via N-terminal RING domain); the interaction plays a role in GRA7-induced pro-inflammatory cytokine production in mouse macrophages.

Its subcellular location is the secreted. The protein localises to the parasitophorous vacuole lumen. It localises to the parasitophorous vacuole membrane. It is found in the cytoplasm. The protein resides in the host cytoplasm. Its subcellular location is the cytoplasmic vesicle. The protein localises to the secretory vesicle. Functionally, binds lipid bilayers, sequesters host endocytic organelles in the parasitophorous vacuole space, and causes their deformation and remodeling. Plays a role in nutrient acquisition from the host. In complex with ROP18, targets immunity-related GTPases (IRGs) to prevent IRG-mediated parasite killing by mouse cells. Important component within a kinase complex, contributing to phosphorylation of mouse IRGA6/IIGP1, an immunity-related GTPase that protects mice from infection by certain intracellular pathogens, by Toxoplasma gondii ROP5 and ROP18. Induces pro-inflammatory cytokine production in host macrophages. Activates host pro-inflammatory signaling pathways in a MyD88-dependent manner. Triggers generation of reactive oxygen species (ROS) in host cells. Activates MAPK pathway in host cells. Activates host NF-kappa-B signaling pathway by interacting with TRAF6 and modulating the 'Lys-63'-linked polyubiquitination of TRAF6. The sequence is that of Dense granule protein 7 from Toxoplasma gondii.